A 303-amino-acid chain; its full sequence is 4-hydroxy-3-methylbut-2-enyl diphosphate reductase (303 aa).

Residue Cys-12 coordinates [4Fe-4S] cluster. (2E)-4-hydroxy-3-methylbut-2-enyl diphosphate is bound by residues His-42 and His-75. Residues His-42 and His-75 each contribute to the dimethylallyl diphosphate site. Isopentenyl diphosphate contacts are provided by His-42 and His-75. Cys-97 contributes to the [4Fe-4S] cluster binding site. A (2E)-4-hydroxy-3-methylbut-2-enyl diphosphate-binding site is contributed by His-125. Dimethylallyl diphosphate is bound at residue His-125. Position 125 (His-125) interacts with isopentenyl diphosphate. Catalysis depends on Glu-127, which acts as the Proton donor. Ser-164 contributes to the (2E)-4-hydroxy-3-methylbut-2-enyl diphosphate binding site. Residue Cys-192 participates in [4Fe-4S] cluster binding. Residues Ser-220, Ser-221, Asn-222, and Ser-264 each contribute to the (2E)-4-hydroxy-3-methylbut-2-enyl diphosphate site. 4 residues coordinate dimethylallyl diphosphate: Ser-220, Ser-221, Asn-222, and Ser-264. Residues Ser-220, Ser-221, Asn-222, and Ser-264 each contribute to the isopentenyl diphosphate site.

The protein belongs to the IspH family. Requires [4Fe-4S] cluster as cofactor.

It catalyses the reaction isopentenyl diphosphate + 2 oxidized [2Fe-2S]-[ferredoxin] + H2O = (2E)-4-hydroxy-3-methylbut-2-enyl diphosphate + 2 reduced [2Fe-2S]-[ferredoxin] + 2 H(+). The enzyme catalyses dimethylallyl diphosphate + 2 oxidized [2Fe-2S]-[ferredoxin] + H2O = (2E)-4-hydroxy-3-methylbut-2-enyl diphosphate + 2 reduced [2Fe-2S]-[ferredoxin] + 2 H(+). It functions in the pathway isoprenoid biosynthesis; dimethylallyl diphosphate biosynthesis; dimethylallyl diphosphate from (2E)-4-hydroxy-3-methylbutenyl diphosphate: step 1/1. Its pathway is isoprenoid biosynthesis; isopentenyl diphosphate biosynthesis via DXP pathway; isopentenyl diphosphate from 1-deoxy-D-xylulose 5-phosphate: step 6/6. Its function is as follows. Catalyzes the conversion of 1-hydroxy-2-methyl-2-(E)-butenyl 4-diphosphate (HMBPP) into a mixture of isopentenyl diphosphate (IPP) and dimethylallyl diphosphate (DMAPP). Acts in the terminal step of the DOXP/MEP pathway for isoprenoid precursor biosynthesis. The polypeptide is 4-hydroxy-3-methylbut-2-enyl diphosphate reductase (Neorickettsia sennetsu (strain ATCC VR-367 / Miyayama) (Ehrlichia sennetsu)).